The primary structure comprises 77 residues: MKLTCVLIVAVLFLTACQLIAADDSRDLKRFSRRKMRDGMLNTKNTKRQCLPPLSLCTMDDDECCDDCILFLCLVTS.

Residues 1–22 (MKLTCVLIVAVLFLTACQLIAA) form the signal peptide. The propeptide occupies 23–46 (DDSRDLKRFSRRKMRDGMLNTKNT). Gln-49 carries the pyrrolidone carboxylic acid modification. Disulfide bonds link Cys-50–Cys-65, Cys-57–Cys-68, and Cys-64–Cys-73.

It belongs to the conotoxin O1 superfamily. Expressed by the venom duct.

Its subcellular location is the secreted. In Conus arenatus (Sand-dusted cone), this protein is Conotoxin ArMKLT2-022.